The following is a 194-amino-acid chain: Large ribosomal subunit protein bL9 (194 aa).

This sequence belongs to the bacterial ribosomal protein bL9 family.

Its function is as follows. Binds to the 23S rRNA. The polypeptide is Large ribosomal subunit protein bL9 (Rhodopseudomonas palustris (strain BisA53)).